Reading from the N-terminus, the 331-residue chain is ADP-L-glycero-D-manno-heptose-6-epimerase (331 aa).

Residues 11–12 (FI), 32–33 (DN), K39, K54, 75–79 (LGACT), and N92 contribute to the NADP(+) site. The Proton acceptor role is filled by Y139. An NADP(+)-binding site is contributed by K143. Position 168 (N168) interacts with substrate. Residues V169 and K177 each coordinate NADP(+). Catalysis depends on K177, which acts as the Proton acceptor. Substrate contacts are provided by residues R179, Q186, 200–203 (FGEH), H213, and Y292.

This sequence belongs to the NAD(P)-dependent epimerase/dehydratase family. HldD subfamily. In terms of assembly, homopentamer. NADP(+) is required as a cofactor.

It catalyses the reaction ADP-D-glycero-beta-D-manno-heptose = ADP-L-glycero-beta-D-manno-heptose. The protein operates within nucleotide-sugar biosynthesis; ADP-L-glycero-beta-D-manno-heptose biosynthesis; ADP-L-glycero-beta-D-manno-heptose from D-glycero-beta-D-manno-heptose 7-phosphate: step 4/4. Functionally, catalyzes the interconversion between ADP-D-glycero-beta-D-manno-heptose and ADP-L-glycero-beta-D-manno-heptose via an epimerization at carbon 6 of the heptose. The sequence is that of ADP-L-glycero-D-manno-heptose-6-epimerase from Cupriavidus pinatubonensis (strain JMP 134 / LMG 1197) (Cupriavidus necator (strain JMP 134)).